We begin with the raw amino-acid sequence, 192 residues long: Ferritin-like protein (192 aa).

Fe(3+) is bound by residues H44, E48, and H102. The segment at 143–179 (RFDHDYADPHAHHDEHRDHLADMPSAGSSHEEVQPVA) is linker. Positions 149–163 (ADPHAHHDEHRDHLA) are enriched in basic and acidic residues. The segment at 149–192 (ADPHAHHDEHRDHLADMPSAGSSHEEVQPVAHKKKGFTVGSLIQ) is disordered. The segment at 180–192 (HKKKGFTVGSLIQ) is targeting peptide.

In terms of assembly, homodimer, with 2 Fe atoms bound at the subunit interface (without encapsulin), probably also a dimer when encapsulated. 42 electron-dense accretions can be seen inside the nanocompartment which are probably this cargo protein, although perhaps up to one cargo dimer can be bound per shell protein.

The protein localises to the encapsulin nanocompartment. It catalyses the reaction 4 Fe(2+) + O2 + 4 H(+) = 4 Fe(3+) + 2 H2O. In terms of biological role, cargo protein of a type 1 encapsulin nanocompartment. A ferritin-like iron-binding protein probably involved in iron mineralization in the encapsulin nanocompartment. Has ferroxidase activity even when encapsulated, the rate is probably controlled by the rate of Fe flux across the nanocompartment pores. Part of the iron-mineralizing encapsulin-associated Firmicute (IMEF) system. 2 different cargo proteins have been identified (IMEF and Fer); when both are expressed in E.coli with the shell protein only IMEF is detected within the nanocompartment. E.coli expressing all 3 genes stores the largest amount of iron and is protected from Fe/H2O2-induced oxidative stress. The sequence is that of Ferritin-like protein from Bacillus thermotolerans (Quasibacillus thermotolerans).